We begin with the raw amino-acid sequence, 76 residues long: Beta-defensin 121 (76 aa).

The first 15 residues, 1–15 (MKLLLLLLTVTLLLA), serve as a signal peptide directing secretion. 3 disulfides stabilise this stretch: Cys-23-Cys-50, Cys-30-Cys-44, and Cys-34-Cys-51.

The protein belongs to the beta-defensin family. As to expression, abundant expression in the male reproductive tract only.

It is found in the secreted. Functionally, has antibacterial activity. The sequence is that of Beta-defensin 121 (DEFB121) from Homo sapiens (Human).